A 662-amino-acid polypeptide reads, in one-letter code: Interferon-induced GTP-binding protein Mx1 (662 aa).

Met-1 carries the post-translational modification N-acetylmethionine. The 274-residue stretch at 67–340 folds into the Dynamin-type G domain; the sequence is DLALPAIAVI…LITHICKSLP (274 aa). A G1 motif region spans residues 77–84; that stretch reads GDQSSGKS. 77-84 is a GTP binding site; it reads GDQSSGKS. The segment at 102-104 is G2 motif; that stretch reads VTR. Positions 178–181 are G3 motif; sequence DLPG. GTP contacts are provided by residues 178-182 and 247-250; these read DLPGI and TKPD. The interval 247–250 is G4 motif; the sequence is TKPD. Residues 279–282 are G5 motif; the sequence is KCRG. Residues 341 to 366 are bundle signaling element (BSE); sequence LLENQIRESHQRITEELQKYGVDVPE. The middle domain stretch occupies residues 366–533; it reads EDENEKMFFL…HFQMEQIVYC (168 aa). Residues 367–632 are stalk; sequence DENEKMFFLI…KDTYSWLLKE (266 aa). The critical for lipid-binding stretch occupies residues 554–557; it reads KKKK. In terms of domain architecture, GED spans 574-662; the sequence is MEEIFQHLMA…ARRRLAQFPG (89 aa).

Belongs to the TRAFAC class dynamin-like GTPase superfamily. Dynamin/Fzo/YdjA family. Homooligomer. Oligomerizes into multimeric filamentous or ring-like structures by virtue of its stalk domain. Oligomerization is critical for GTPase activity, protein stability, and recognition of viral target structures. Interacts with TRPC1, TRPC3, TRPC4, TRPC5, TRPC6 and TRPC7. Interacts with HSPA5. Interacts with TUBB/TUBB5. Interacts with DDX39A and DDX39B. ISGylated.

Its subcellular location is the cytoplasm. The protein localises to the endoplasmic reticulum membrane. It is found in the perinuclear region. Its function is as follows. Interferon-induced dynamin-like GTPase with antiviral activity. This chain is Interferon-induced GTP-binding protein Mx1 (MX1), found in Pongo abelii (Sumatran orangutan).